Here is a 164-residue protein sequence, read N- to C-terminus: ATP synthase subunit b 2 (164 aa).

The chain crosses the membrane as a helical span at residues 4–24 (TFWAFVGLVLFLALLVYFQIP).

Belongs to the ATPase B chain family. In terms of assembly, F-type ATPases have 2 components, F(1) - the catalytic core - and F(0) - the membrane proton channel. F(1) has five subunits: alpha(3), beta(3), gamma(1), delta(1), epsilon(1). F(0) has three main subunits: a(1), b(2) and c(10-14). The alpha and beta chains form an alternating ring which encloses part of the gamma chain. F(1) is attached to F(0) by a central stalk formed by the gamma and epsilon chains, while a peripheral stalk is formed by the delta and b chains.

Its subcellular location is the cell inner membrane. F(1)F(0) ATP synthase produces ATP from ADP in the presence of a proton or sodium gradient. F-type ATPases consist of two structural domains, F(1) containing the extramembraneous catalytic core and F(0) containing the membrane proton channel, linked together by a central stalk and a peripheral stalk. During catalysis, ATP synthesis in the catalytic domain of F(1) is coupled via a rotary mechanism of the central stalk subunits to proton translocation. Its function is as follows. Component of the F(0) channel, it forms part of the peripheral stalk, linking F(1) to F(0). The polypeptide is ATP synthase subunit b 2 (Bartonella tribocorum (strain CIP 105476 / IBS 506)).